The primary structure comprises 73 residues: Cell division protein ZapB (73 aa).

Residues 3–67 (LELLSKLETK…WNDKVTGLVG (65 aa)) adopt a coiled-coil conformation.

Belongs to the ZapB family. As to quaternary structure, homodimer. The ends of the coiled-coil dimer bind to each other, forming polymers. Interacts with FtsZ.

It localises to the cytoplasm. Functionally, non-essential, abundant cell division factor that is required for proper Z-ring formation. It is recruited early to the divisome by direct interaction with FtsZ, stimulating Z-ring assembly and thereby promoting cell division earlier in the cell cycle. Its recruitment to the Z-ring requires functional FtsA or ZipA. This chain is Cell division protein ZapB, found in Shewanella sp. (strain MR-4).